Reading from the N-terminus, the 365-residue chain is tRNA-specific 2-thiouridylase MnmA (365 aa).

Residues 6–13 (AMSGGVDS) and Met32 contribute to the ATP site. The active-site Nucleophile is the Cys101. Cys101 and Cys199 are oxidised to a cystine. Residue Gly125 coordinates ATP. An interaction with tRNA region spans residues 148 to 150 (KDQ). The Cysteine persulfide intermediate role is filled by Cys199.

It belongs to the MnmA/TRMU family.

It localises to the cytoplasm. The catalysed reaction is S-sulfanyl-L-cysteinyl-[protein] + uridine(34) in tRNA + AH2 + ATP = 2-thiouridine(34) in tRNA + L-cysteinyl-[protein] + A + AMP + diphosphate + H(+). In terms of biological role, catalyzes the 2-thiolation of uridine at the wobble position (U34) of tRNA, leading to the formation of s(2)U34. This is tRNA-specific 2-thiouridylase MnmA from Kineococcus radiotolerans (strain ATCC BAA-149 / DSM 14245 / SRS30216).